Reading from the N-terminus, the 93-residue chain is YcgL domain-containing protein Shal_1837 (93 aa).

Positions 1–85 (MICAVYKSRR…PVVNLLEQHK (85 aa)) constitute a YcgL domain.

This chain is YcgL domain-containing protein Shal_1837, found in Shewanella halifaxensis (strain HAW-EB4).